A 168-amino-acid chain; its full sequence is DAZ-associated protein 2 (168 aa).

The segment covering 1–13 (MNSKGQYPTQPTY) has biased composition (low complexity). A disordered region spans residues 1-25 (MNSKGQYPTQPTYPVQPPGNPVYPQ). The short motif at 39–42 (PPAY) is the PPAY element. S77 is modified (phosphoserine).

Interacts with SOX6. Interacts with DAZ1 and DAZL. Interacts with IL17RB. May interact with FAM168B. Interacts with INCA1. Interacts with EIF4G1 and EIF4G2. Interacts (via PPAY motif) with NEDD4 (via WW domains). Interacts with transcription factor TCF4; the interaction results in localization of DAZAP2 to the nucleus. Interacts with transcription factors TCF7 and TCF7L1. Interacts with transcription factor LEF1. Interacts with serine/threonine-protein kinase HIPK2; the interaction results in phosphorylation of DAZAP2 which causes localization of DAZAP2 to the nucleus, reduces interaction of DAZAP2 with HIPK2 and prevents DAZAP2-dependent degradation of HIPK2. Interacts with ubiquitin ligase SIAH1; the interaction is decreased following phosphorylation of DAZAP2 by HIPK2. Interacts with TP53; the interaction is triggered by DNA damage. Post-translationally, ubiquitinated by SMURF2, leading to proteasomal degradation. Ubiquitinated by NEDD4, leading to proteasomal degradation. In terms of processing, following DNA damage, phosphorylated by HIPK2 which promotes DAZAP2 localization to the nucleus, reduces interaction of DAZAP2 with HIPK2 and SIAH1, and prevents DAZAP2-dependent ubiquitination of HIPK2 by E3 ubiquitin-protein ligase SIAH1 and subsequent HIPK2 proteasomal degradation. As to expression, widely expressed. Highly expressed in brain.

It is found in the cytoplasm. It localises to the nucleus. The protein localises to the nucleus speckle. The protein resides in the nuclear body. Its subcellular location is the stress granule. In unstressed cells, promotes SIAH1-mediated polyubiquitination and degradation of the serine/threonine-protein kinase HIPK2, probably by acting as a loading factor that potentiates complex formation between HIPK2 and ubiquitin ligase SIAH1. In response to DNA damage, localizes to the nucleus following phosphorylation by HIPK2 and modulates the expression of a subset of TP53/p53 target genes by binding to TP53 at target gene promoters. This limits the expression of a number of cell death-mediating TP53 target genes, reducing DNA damage-induced cell death. Enhances the binding of transcription factor TCF7L2/TCF4, a Wnt signaling pathway effector, to the promoters of target genes. Plays a role in stress granule formation. The polypeptide is DAZ-associated protein 2 (Dazap2) (Mus musculus (Mouse)).